Consider the following 275-residue polypeptide: Adenylate kinase (275 aa).

Position 54–59 (Gly-54–Thr-59) interacts with ATP. The interval Ala-74–Val-103 is NMP. AMP contacts are provided by residues Thr-75, Arg-80, Gly-101–Val-103, Gly-130–Arg-133, and Gln-137. The LID stretch occupies residues Gly-171–Asp-208. Residues Arg-172 and Ser-181–Tyr-182 each bind ATP. AMP-binding residues include Arg-205 and Arg-216. Gln-244 is an ATP binding site.

The protein belongs to the adenylate kinase family. AK2 subfamily. Monomer.

The protein resides in the cytoplasm. It is found in the cytosol. Its subcellular location is the mitochondrion intermembrane space. The enzyme catalyses AMP + ATP = 2 ADP. In terms of biological role, catalyzes the reversible transfer of the terminal phosphate group between ATP and AMP. Plays an important role in cellular energy homeostasis and in adenine nucleotide metabolism. Adenylate kinase activity is critical for regulation of the phosphate utilization and the AMP de novo biosynthesis pathways. The chain is Adenylate kinase (adk1) from Botryotinia fuckeliana (strain B05.10) (Noble rot fungus).